Reading from the N-terminus, the 548-residue chain is Folylpolyglutamate synthase (548 aa).

130-133 (GKGS) contributes to the ATP binding site. The Mg(2+) site is built by S157, E234, and H262. 2 residues coordinate ATP: R382 and D396.

This sequence belongs to the folylpolyglutamate synthase family. It depends on a monovalent cation as a cofactor.

The protein resides in the mitochondrion inner membrane. It is found in the mitochondrion matrix. It localises to the cytoplasm. The catalysed reaction is (6S)-5,6,7,8-tetrahydrofolyl-(gamma-L-Glu)(n) + L-glutamate + ATP = (6S)-5,6,7,8-tetrahydrofolyl-(gamma-L-Glu)(n+1) + ADP + phosphate + H(+). It functions in the pathway cofactor biosynthesis; tetrahydrofolylpolyglutamate biosynthesis. In terms of biological role, catalyzes conversion of folates to polyglutamate derivatives allowing concentration of folate compounds in the cell and the intracellular retention of these cofactors, which are important substrates for most of the folate-dependent enzymes that are involved in one-carbon transfer reactions involved in purine, pyrimidine and amino acid synthesis. Required for methionine synthesis and maintenance of intact mitochondrial DNA. Involved in telomere maintenance. The chain is Folylpolyglutamate synthase from Saccharomyces cerevisiae (strain FostersO) (Baker's yeast).